Reading from the N-terminus, the 156-residue chain is 6,7-dimethyl-8-ribityllumazine synthase (156 aa).

Residues Phe23, 57 to 59 (AYE), and 81 to 83 (AII) each bind 5-amino-6-(D-ribitylamino)uracil. 86 to 87 (GT) is a (2S)-2-hydroxy-3-oxobutyl phosphate binding site. Catalysis depends on His89, which acts as the Proton donor. Phe114 contributes to the 5-amino-6-(D-ribitylamino)uracil binding site. Arg128 is a binding site for (2S)-2-hydroxy-3-oxobutyl phosphate.

Belongs to the DMRL synthase family.

The catalysed reaction is (2S)-2-hydroxy-3-oxobutyl phosphate + 5-amino-6-(D-ribitylamino)uracil = 6,7-dimethyl-8-(1-D-ribityl)lumazine + phosphate + 2 H2O + H(+). It functions in the pathway cofactor biosynthesis; riboflavin biosynthesis; riboflavin from 2-hydroxy-3-oxobutyl phosphate and 5-amino-6-(D-ribitylamino)uracil: step 1/2. In terms of biological role, catalyzes the formation of 6,7-dimethyl-8-ribityllumazine by condensation of 5-amino-6-(D-ribitylamino)uracil with 3,4-dihydroxy-2-butanone 4-phosphate. This is the penultimate step in the biosynthesis of riboflavin. This Helicobacter acinonychis (strain Sheeba) protein is 6,7-dimethyl-8-ribityllumazine synthase.